Reading from the N-terminus, the 1274-residue chain is RNA-directed RNA polymerase VP2 (1274 aa).

In terms of domain architecture, RdRp catalytic spans 561–798 (LSTTSGSVVT…KLYALMGCRI (238 aa)).

The protein belongs to the reoviridae RNA-directed RNA polymerase family.

The protein resides in the virion. The catalysed reaction is RNA(n) + a ribonucleoside 5'-triphosphate = RNA(n+1) + diphosphate. Its function is as follows. RNA-directed RNA polymerase that is involved in transcription and genome replication. Following infection, it catalyzes the synthesis of fully conservative plus strands. After core assembly, which consists in recruitment of one capped plus-strand for each genomic segments and polymerase complexes, the polymerase switches mode and catalyzes the synthesis of complementary minus-strands. This is RNA-directed RNA polymerase VP2 (S2) from Aquareovirus C (isolate Golden shiner/USA/GSRV/1977) (AQRV-C).